A 471-amino-acid polypeptide reads, in one-letter code: UDP-N-acetylmuramoylalanine--D-glutamate ligase (471 aa).

120-126 contacts ATP; it reads GSNGKTT.

This sequence belongs to the MurCDEF family.

The protein localises to the cytoplasm. It carries out the reaction UDP-N-acetyl-alpha-D-muramoyl-L-alanine + D-glutamate + ATP = UDP-N-acetyl-alpha-D-muramoyl-L-alanyl-D-glutamate + ADP + phosphate + H(+). It functions in the pathway cell wall biogenesis; peptidoglycan biosynthesis. Functionally, cell wall formation. Catalyzes the addition of glutamate to the nucleotide precursor UDP-N-acetylmuramoyl-L-alanine (UMA). The protein is UDP-N-acetylmuramoylalanine--D-glutamate ligase of Nitrosomonas europaea (strain ATCC 19718 / CIP 103999 / KCTC 2705 / NBRC 14298).